Reading from the N-terminus, the 359-residue chain is MKIAFIGEAVSGFGGMETVISNVIHTFENSSPKINCEMFFFCRNDKMDKAWLKEIKYAQSFSNIKLSFLRRAKHVYNFSQWLKETSPDIVICIDVISCLYANKARKKSGKHFTIFSWPHFSLDHKKHAECITYADYHLAISSGIKEQIMARGISAQDISVVYNPVSIKTVIVPPPERDKPAVFLYVGRLKFEGQKRVKDLFDGLARTTGEWQLHIIGDGSDFEKCQAYSRELGIEQRVIWYGWQSAPWQVVQQKIKNVTALLLTSAFEGFPMTLLEAMSYGIPCISSDCMSGPRDMIKPGLNGELYTPGAIDDFVGHLNRVISGEVKYQHDIIPGTIERFYDVLYFKNFNNAIFSKLQK.

UDP is bound by residues Gln244 and Glu276.

The protein belongs to the glycosyltransferase group 1 family. Glycosyltransferase 4 subfamily.

The enzyme catalyses alpha-D-Glc-(1-&gt;3)-[L-alpha-D-Hep-(1-&gt;7)]-4-O-PO3(2-)-L-alpha-D-Hep-(1-&gt;3)-4-O-PO3(2-)-L-alpha-D-Hep-(1-&gt;5)-[alpha-Kdo-(2-&gt;4)]-alpha-Kdo-(2-&gt;6)-lipid A + UDP-alpha-D-galactose = alpha-D-Gal-(1-&gt;6)-alpha-D-Glc-(1-&gt;3)-[L-alpha-D-Hep-(1-&gt;7)]-4-O-PO3(2-)-L-alpha-D-Hep-(1-&gt;3)-4-O-PO3(2-)-L-alpha-D-Hep-(1-&gt;5)-[alpha-Kdo-(2-&gt;4)]-alpha-Kdo-(2-&gt;6)-lipid A + UDP + H(+). Its pathway is bacterial outer membrane biogenesis; LPS core biosynthesis. Its function is as follows. Galactosyltransferase involved in the biosynthesis of the core oligosaccharide region of lipopolysaccharide (LPS). Catalyzes the addition of galactose from UDP-galactose to the first glucose residue of the LPS outer core. The chain is Lipopolysaccharide 1,6-galactosyltransferase from Salmonella typhimurium (strain LT2 / SGSC1412 / ATCC 700720).